Consider the following 260-residue polypeptide: MIEINNKVDYIFYTNNTPNTYKIKLILLELEKKHSITFESRYINITKKENYSDEFVKINPNKKVPAIVDQTGEKPFVVFESVSILIYLAQKYNTFLPDFKTNPHENSDVITWAVWQAANLGPAFGQYFHFSYFSPTVQEYSLHRFNNEAQRVLRLLDDRLSVSQYIGGNEFSIADIASAGWLLYLNFAPIYKATKERFPHIFKWLDLINQRDAVKEINQSISEGFKTFNPSALRALFTDDPELINAKAPIGIENVVLKYD.

The 90-residue stretch at 7–96 (KVDYIFYTNN…YLAQKYNTFL (90 aa)) folds into the GST N-terminal domain. Residues 102–233 (NPHENSDVIT…GFKTFNPSAL (132 aa)) form the GST C-terminal domain.

This sequence belongs to the GST superfamily.

This is Glutathione S-transferase domain-containing protein DDB_G0274223 from Dictyostelium discoideum (Social amoeba).